A 202-amino-acid polypeptide reads, in one-letter code: Glycerol-3-phosphate acyltransferase (202 aa).

5 helical membrane passes run 3–23, 87–107, 118–138, 144–164, and 167–187; these read NLIIYAFIYLLGSIPFGLILA, LLWSVAVLAILGHCFSIYLLF, GAMIVLLPLEVLTAFIVWVVI, ISSLASLAALLAFVVSSFIFN, and LEIHTHAPVFIIAFIIVYKHL.

It belongs to the PlsY family. Probably interacts with PlsX.

Its subcellular location is the cell inner membrane. The catalysed reaction is an acyl phosphate + sn-glycerol 3-phosphate = a 1-acyl-sn-glycero-3-phosphate + phosphate. It functions in the pathway lipid metabolism; phospholipid metabolism. Catalyzes the transfer of an acyl group from acyl-phosphate (acyl-PO(4)) to glycerol-3-phosphate (G3P) to form lysophosphatidic acid (LPA). This enzyme utilizes acyl-phosphate as fatty acyl donor, but not acyl-CoA or acyl-ACP. In Campylobacter jejuni subsp. jejuni serotype O:2 (strain ATCC 700819 / NCTC 11168), this protein is Glycerol-3-phosphate acyltransferase.